The primary structure comprises 199 residues: MYEGIVQDLIDELGRLPGIGPKSAQRIAFHLLAADPVDVRRLATALTEVKEKVQFCRSCFNVAQSELCRICSDPRRDPSSICVVEEPKDVVAIERTREFRGRYHVLGGAINPIGGVGPDDLHIRELVARLADGTVTELILATDPNTEGEVTASYLARQIAPMGLKVTRLASGLPMGGDLEWADEVTLGRAFEGRRVVSA.

The C4-type zinc finger occupies 56–71 (CRSCFNVAQSELCRIC). Positions 79–174 (SSICVVEEPK…KVTRLASGLP (96 aa)) constitute a Toprim domain.

The protein belongs to the RecR family.

In terms of biological role, may play a role in DNA repair. It seems to be involved in an RecBC-independent recombinational process of DNA repair. It may act with RecF and RecO. The protein is Recombination protein RecR of Frankia casuarinae (strain DSM 45818 / CECT 9043 / HFP020203 / CcI3).